The sequence spans 227 residues: ATP synthase F(0) complex subunit a (227 aa).

Transmembrane regions (helical) follow at residues 12-32 (PYLM…LLFP), 69-89 (WALL…MGLL), 98-118 (QLSM…LIGL), 139-159 (IPIL…ALGV), 170-190 (LLIQ…PSIS), and 196-216 (ILLL…YVFV).

This sequence belongs to the ATPase A chain family. As to quaternary structure, component of the ATP synthase complex composed at least of ATP5F1A/subunit alpha, ATP5F1B/subunit beta, ATP5MC1/subunit c (homooctomer), MT-ATP6/subunit a, MT-ATP8/subunit 8, ATP5ME/subunit e, ATP5MF/subunit f, ATP5MG/subunit g, ATP5MK/subunit k, ATP5MJ/subunit j, ATP5F1C/subunit gamma, ATP5F1D/subunit delta, ATP5F1E/subunit epsilon, ATP5PF/subunit F6, ATP5PB/subunit b, ATP5PD/subunit d, ATP5PO/subunit OSCP. ATP synthase complex consists of a soluble F(1) head domain (subunits alpha(3) and beta(3)) - the catalytic core - and a membrane F(0) domain - the membrane proton channel (subunits c, a, 8, e, f, g, k and j). These two domains are linked by a central stalk (subunits gamma, delta, and epsilon) rotating inside the F1 region and a stationary peripheral stalk (subunits F6, b, d, and OSCP). Interacts with DNAJC30; interaction is direct.

The protein localises to the mitochondrion inner membrane. It catalyses the reaction H(+)(in) = H(+)(out). Functionally, subunit a, of the mitochondrial membrane ATP synthase complex (F(1)F(0) ATP synthase or Complex V) that produces ATP from ADP in the presence of a proton gradient across the membrane which is generated by electron transport complexes of the respiratory chain. ATP synthase complex consist of a soluble F(1) head domain - the catalytic core - and a membrane F(1) domain - the membrane proton channel. These two domains are linked by a central stalk rotating inside the F(1) region and a stationary peripheral stalk. During catalysis, ATP synthesis in the catalytic domain of F(1) is coupled via a rotary mechanism of the central stalk subunits to proton translocation. With the subunit c (ATP5MC1), forms the proton-conducting channel in the F(0) domain, that contains two crucial half-channels (inlet and outlet) that facilitate proton movement from the mitochondrial intermembrane space (IMS) into the matrix. Protons are taken up via the inlet half-channel and released through the outlet half-channel, following a Grotthuss mechanism. This is ATP synthase F(0) complex subunit a from Coturnix japonica (Japanese quail).